Consider the following 172-residue polypeptide: C-phycocyanin beta chain (172 aa).

An N4-methylasparagine modification is found at Asn72. Cys82 and Cys153 together coordinate (2R,3E)-phycocyanobilin.

It belongs to the phycobiliprotein family. Heterodimer of an alpha and a beta subunit, which further assembles into trimers and the trimers into hexamers. The basic functional unit of phycobiliproteins is a ring-shaped hexamer formed from two back-to-back trimers contacting via the alpha chain subunits. The trimers are composed of alpha/beta subunit heterodimers arranged around a three-fold axis of symmetry. The phycoerythrins also contain a gamma subunit which is located in the center of the hexamer. Contains two covalently linked bilin chromophores.

The protein localises to the plastid. It is found in the chloroplast thylakoid membrane. Light-harvesting photosynthetic bile pigment-protein from the phycobiliprotein complex (phycobilisome, PBS). Phycocyanin is the major phycobiliprotein in the PBS rod. The chain is C-phycocyanin beta chain (cpcB) from Rhodella violacea (Red alga).